The sequence spans 194 residues: Histone H1.0 (194 aa).

Methionine 1 carries the N-acetylmethionine modification. Positions 1 to 11 (MTENSTSAPAA) are enriched in low complexity. Residues 1 to 29 (MTENSTSAPAAKPKRAKASKKSTDHPKYS) are disordered. Residue threonine 2 is modified to N-acetylthreonine; in Histone H1.0, N-terminally processed. The region spanning 24-97 (DHPKYSDMVV…GASGSFRLAK (74 aa)) is the H15 domain. Residue arginine 42 is modified to Citrulline. A disordered region spans residues 84–194 (TKGVGASGSF…SSAKRAGKKK (111 aa)). Residue serine 104 is modified to ADP-ribosylserine. Basic residues predominate over residues 105–194 (VAFKKTKKEI…SSAKRAGKKK (90 aa)).

This sequence belongs to the histone H1/H5 family. Post-translationally, ADP-ribosylated on Ser-104 in response to DNA damage.

The protein resides in the nucleus. Its subcellular location is the chromosome. In terms of biological role, histones H1 are necessary for the condensation of nucleosome chains into higher-order structures. The histones H1.0 are found in cells that are in terminal stages of differentiation or that have low rates of cell division. In Pongo abelii (Sumatran orangutan), this protein is Histone H1.0 (H1-0).